The chain runs to 140 residues: Large ribosomal subunit protein uL22 (140 aa).

The disordered stretch occupies residues 115–140 (AKPAAAKKDPKAAAAKADANAGTKEG).

It belongs to the universal ribosomal protein uL22 family. In terms of assembly, part of the 50S ribosomal subunit.

In terms of biological role, this protein binds specifically to 23S rRNA; its binding is stimulated by other ribosomal proteins, e.g. L4, L17, and L20. It is important during the early stages of 50S assembly. It makes multiple contacts with different domains of the 23S rRNA in the assembled 50S subunit and ribosome. The globular domain of the protein is located near the polypeptide exit tunnel on the outside of the subunit, while an extended beta-hairpin is found that lines the wall of the exit tunnel in the center of the 70S ribosome. The polypeptide is Large ribosomal subunit protein uL22 (Heliobacterium modesticaldum (strain ATCC 51547 / Ice1)).